Reading from the N-terminus, the 360-residue chain is Casein kinase II subunit alpha (360 aa).

The Protein kinase domain maps to 38-323 (YQLVRKLGRG…AQEAMGHEYF (286 aa)). ATP-binding positions include 44–52 (LGRGKYSEV) and lysine 67. Aspartate 155 (proton acceptor) is an active-site residue. The disordered stretch occupies residues 334–360 (NGTEQADGQGASNSASSQSSDAKIDGA). Positions 338-354 (QADGQGASNSASSQSSD) are enriched in low complexity.

This sequence belongs to the protein kinase superfamily. Ser/Thr protein kinase family. CK2 subfamily. Tetramer of two alpha and two beta chains. In terms of tissue distribution, expressed in a subset of the adult male sensory neurons: CEM head neurons, ray RnB neurons, and hook HOB tail neurons.

Its subcellular location is the cell projection. It is found in the axon. The protein resides in the cilium. The protein localises to the dendrite. It localises to the perikaryon. It catalyses the reaction L-seryl-[protein] + ATP = O-phospho-L-seryl-[protein] + ADP + H(+). The catalysed reaction is L-threonyl-[protein] + ATP = O-phospho-L-threonyl-[protein] + ADP + H(+). Functionally, casein kinases are operationally defined by their preferential utilization of acidic proteins such as caseins as substrates. The alpha chain contains the catalytic site. May participate in Wnt signaling. Modulates two aspects of male mating behavior; response to hermaphrodite contact and vulval location, acting in the same pathway as lov-1 and pkd-2. This is Casein kinase II subunit alpha (kin-3) from Caenorhabditis elegans.